The primary structure comprises 469 residues: Beta-1,3-xylanase (469 aa).

The signal sequence occupies residues 1–22 (MKKLAKMISIATLGACAFSAHA). Residues 23–293 (LDGKLVPNEG…LKGFTYINAD (271 aa)) form the GH26 domain. Glu138 functions as the Proton donor in the catalytic mechanism. Catalysis depends on Glu234, which acts as the Nucleophile. Over residues 352–374 (DNGGDNGGDNGGDNGGDNGGDNG) the composition is skewed to gly residues. The segment at 352 to 380 (DNGGDNGGDNGGDNGGDNGGDNGGTEPPE) is disordered. A carbohydrate binding module (CBM) region spans residues 377–469 (EPPENCQDDF…NITFTTQVCN (93 aa)). 2 disulfide bridges follow: Cys382/Cys468 and Cys413/Cys418.

This sequence belongs to the glycosyl hydrolase 26 family.

The catalysed reaction is Random hydrolysis of (1-&gt;3)-beta-D-glycosidic linkages in (1-&gt;3)-beta-D-xylans.. With respect to regulation, completely inhibited by CuCl(2), FeCl(3), HgCl(2) and N-bromosuccinimide. Moderately inhibited by AgCl, AlCl(3), Pb(CH(3)COO)(2) and dithiothreitol. BaCl(2), CaCl(2), KCl, MgCl(2), MnCl(2), NaCl, ZnCl(2), ethylenediaminetetraacetic acid, N-ethylmaleimide, iodoacetic acid and p-chloromercuribenzoic acid have little or no effect on activity. Catalyzes the hydrolysis of beta-1,3-xylan into oligosaccharides, mainly xylotriose and xylobiose with smaller amounts of xylotetraose, xylose, xylopentaose and xylohexaose. Does not hydrolyze xylobiose, p-nitrophenyl-beta-xyloside, beta-1,4-xylan, carboxymethylcellulose, curdlan, glucomannan or beta-1,4-mannan. The protein is Beta-1,3-xylanase of Alcaligenes sp.